Reading from the N-terminus, the 181-residue chain is Transmembrane protein 47 (181 aa).

N-acetylalanine is present on Ala2. Helical transmembrane passes span 21–41 (LVGL…VLSP), 83–103 (ALLL…LISI), 115–135 (VAVM…LYPI), and 152–172 (GYGL…LYCL).

This sequence belongs to the TMEM47 family. As to quaternary structure, interacts with CTNNB1, CTNNA1, PRKCI, PARD6B. Interacts with FYB1. As to expression, expressed in podocytes (at protein level).

Its subcellular location is the membrane. It localises to the cell junction. The protein resides in the adherens junction. Functionally, regulates cell junction organization in epithelial cells. May play a role in the transition from adherens junction to tight junction assembly. May regulate F-actin polymerization required for tight junctional localization dynamics and affect the junctional localization of PARD6B. During podocyte differentiation may negatively regulate activity of FYN and subsequently the abundance of nephrin. The sequence is that of Transmembrane protein 47 (Tmem47) from Mus musculus (Mouse).